A 73-amino-acid chain; its full sequence is Translation initiation factor IF-1 (73 aa).

An S1-like domain is found at 1 to 73 (MAKKDGVIEI…TRGRIVYRYK (73 aa)).

It belongs to the IF-1 family. Component of the 30S ribosomal translation pre-initiation complex which assembles on the 30S ribosome in the order IF-2 and IF-3, IF-1 and N-formylmethionyl-tRNA(fMet); mRNA recruitment can occur at any time during PIC assembly.

It is found in the cytoplasm. One of the essential components for the initiation of protein synthesis. Stabilizes the binding of IF-2 and IF-3 on the 30S subunit to which N-formylmethionyl-tRNA(fMet) subsequently binds. Helps modulate mRNA selection, yielding the 30S pre-initiation complex (PIC). Upon addition of the 50S ribosomal subunit IF-1, IF-2 and IF-3 are released leaving the mature 70S translation initiation complex. This chain is Translation initiation factor IF-1, found in Clavibacter michiganensis subsp. michiganensis (strain NCPPB 382).